A 150-amino-acid polypeptide reads, in one-letter code: D-aminoacyl-tRNA deacylase (150 aa).

A Gly-cisPro motif, important for rejection of L-amino acids motif is present at residues 138 to 139; it reads GP.

This sequence belongs to the DTD family. In terms of assembly, homodimer.

The protein localises to the cytoplasm. The enzyme catalyses glycyl-tRNA(Ala) + H2O = tRNA(Ala) + glycine + H(+). The catalysed reaction is a D-aminoacyl-tRNA + H2O = a tRNA + a D-alpha-amino acid + H(+). Its function is as follows. An aminoacyl-tRNA editing enzyme that deacylates mischarged D-aminoacyl-tRNAs. Also deacylates mischarged glycyl-tRNA(Ala), protecting cells against glycine mischarging by AlaRS. Acts via tRNA-based rather than protein-based catalysis; rejects L-amino acids rather than detecting D-amino acids in the active site. By recycling D-aminoacyl-tRNA to D-amino acids and free tRNA molecules, this enzyme counteracts the toxicity associated with the formation of D-aminoacyl-tRNA entities in vivo and helps enforce protein L-homochirality. This is D-aminoacyl-tRNA deacylase from Bacteroides fragilis (strain YCH46).